The following is a 105-amino-acid chain: MKKKIRGTKNRPRLCVFRSNKHIYAQIIDDTNNKIIATSSTLVILSEQNKKISNDCHAAHKIGQNIAQKSKALGIKKVIFDRQNKIYHGRIKALAEAVREEGIEF.

The protein belongs to the universal ribosomal protein uL18 family. Part of the 50S ribosomal subunit; contacts the 5S rRNA.

Its subcellular location is the plastid. The protein localises to the chloroplast. Its function is as follows. Binds 5S rRNA, forms part of the central protuberance of the 50S subunit. This Gracilaria tenuistipitata var. liui (Red alga) protein is Large ribosomal subunit protein uL18c (rpl18).